The chain runs to 163 residues: uncharacterized protein (163 aa).

At 1 to 33 the chain is on the cytoplasmic side; the sequence is MKTLDKITNYDLFDFADEFLKFVPVFRPNPTVT. The helical transmembrane segment at 34 to 54 threads the bilayer; it reads CLFGNPLTNLLVNGTGAACFF. Residues 55 to 117 lie on the Extracellular side of the membrane; sequence EFCSLALIKV…SLGMALPDDD (63 aa). A helical membrane pass occupies residues 118–138; the sequence is VLLSITFWFLCNSSFSILFVF. The Cytoplasmic portion of the chain corresponds to 139–163; it reads ELRIFLRTVNNLLVVFLSVLKRNDL.

The protein localises to the membrane. This is an uncharacterized protein from Saccharomyces cerevisiae (strain ATCC 204508 / S288c) (Baker's yeast).